The primary structure comprises 644 residues: Core protein VP4 (644 aa).

This sequence belongs to the orbivirus VP4 family.

Its subcellular location is the virion. The VP4 protein is one of the five proteins (with VP1, VP3, VP6 and VP7) which form the inner capsid of the virus. This is Core protein VP4 (Segment-4) from Bluetongue virus 2 (isolate USA) (BTV 2).